Reading from the N-terminus, the 179-residue chain is Replication restart protein DnaT (179 aa).

The span at 151–168 (SRSSNGGMPQRDINSVSE) shows a compositional bias: polar residues. Positions 151-179 (SRSSNGGMPQRDINSVSEPDNHIPPGFRG) are disordered.

The protein belongs to the DnaT family. Homooligomerizes. Interacts with PriB. Component of the replication restart primosome. Primosome assembly occurs via a 'hand-off' mechanism. PriA binds to replication forks, subsequently PriB then DnaT bind; DnaT then displaces ssDNA to generate the helicase loading substrate.

In terms of biological role, involved in the restart of stalled replication forks, which reloads the replicative helicase on sites other than the origin of replication. Can function in multiple replication restart pathways. Displaces ssDNA from a PriB-ssDNA complex. Probably forms a spiral filament on ssDNA. This Salmonella arizonae (strain ATCC BAA-731 / CDC346-86 / RSK2980) protein is Replication restart protein DnaT.